The primary structure comprises 2144 residues: Cadherin EGF LAG seven-pass G-type receptor 2 (2144 aa).

4 Cadherin domains span residues 1–40 (EDQV…APQF), 41–146 (LRDS…PPVF), 147–248 (EQDE…PPVL), and 253–371 (ILFN…SPLL). Residues 1-1605 (EDQVSYTLAI…GEILPLKTLT (1605 aa)) lie on the Extracellular side of the membrane. 4 N-linked (GlcNAc...) asparagine glycosylation sites follow: Asn261, Asn301, Asn407, and Asn437. The EGF-like 1; calcium-binding domain occupies 453-511 (DDNICLREPCENYMRCVSVLRFDSSAPFIASSSVLFRPIHPVGGLRCRCPPGFTGDYCE). 9 disulfides stabilise this stretch: Cys457/Cys468, Cys462/Cys499, Cys501/Cys510, Cys517/Cys528, Cys522/Cys537, Cys539/Cys548, Cys557/Cys568, Cys562/Cys578, and Cys580/Cys590. Residues 513–549 (EVDLCYSRPCGPHGHCRSREGGYTCLCRDGYTGEHCE) form the EGF-like 2; calcium-binding domain. The EGF-like 3; calcium-binding domain maps to 553–591 (RSGRCTPGVCKNGGTCVNLLVGGFKCDCPSGDFEKPFCQ). The Laminin G-like 1 domain maps to 592–796 (VTTRSFPARS…IANNGTVPGC (205 aa)). Asn726 and Asn790 each carry an N-linked (GlcNAc...) asparagine glycan. 4 disulfides stabilise this stretch: Cys770-Cys796, Cys803-Cys814, Cys808-Cys823, and Cys825-Cys834. The EGF-like 4; calcium-binding domain maps to 799–835 (KKNVCDSNTCHNGGTCVNQWDAFSCECPLGFGGKSCA). Position 816 is a (3R)-3-hydroxyasparagine (Asn816). Residues 839 to 1016 (ANPQRFLGSS…GESINVEPGC (178 aa)) form the Laminin G-like 2 domain. Asn966 is a glycosylation site (N-linked (GlcNAc...) asparagine). Intrachain disulfides connect Cys986/Cys1016, Cys1022/Cys1033, Cys1027/Cys1042, Cys1044/Cys1053, Cys1057/Cys1068, Cys1062/Cys1080, Cys1082/Cys1091, Cys1112/Cys1124, Cys1114/Cys1131, Cys1133/Cys1146, Cys1149/Cys1161, Cys1151/Cys1168, Cys1170/Cys1179, and Cys1182/Cys1194. The EGF-like 5; calcium-binding domain maps to 1018 to 1053 (WPDPCDSNPCPTNSYCSNDWDSYSCSCDPGYYGDNC). Residue Asn1035 is modified to (3R)-3-hydroxyasparagine. A glycan (N-linked (GlcNAc...) asparagine) is linked at Asn1052. The EGF-like 6; calcium-binding domain maps to 1054–1092 (TNVCDLNPCEHQSACTRKPSAPHGYICECLPNYLGPYCE). In terms of domain architecture, EGF-like 7; calcium-binding spans 1108 to 1147 (TCGPCNCDVSKGFDPDCNKTSGECHCKENHYRPPSSPTCL). An N-linked (GlcNAc...) asparagine glycan is attached at Asn1125. One can recognise a Laminin EGF-like domain in the interval 1149–1196 (CDCYPTGSLSRVCDPEDGQCPCKPGVIGRQCDRCDNPFAEVTTNGCEV). N-linked (GlcNAc...) asparagine glycosylation is found at Asn1249, Asn1268, and Asn1286. The 171-residue stretch at 1424-1594 (ETTVILPESV…AVLMDVSRRE (171 aa)) folds into the GAIN-B domain. The segment at 1439-1466 (PMVRSAGPGEAQETEELARRQRRHPELS) is disordered. Disulfide bonds link Cys1544/Cys1576 and Cys1564/Cys1578. The interval 1544-1594 (CVFWNHSILVSGTGGWSARGCEVVFRNESHVSCQCNHMTSFAVLMDVSRRE) is GPS. N-linked (GlcNAc...) asparagine glycans are attached at residues Asn1548 and Asn1570. The chain crosses the membrane as a helical span at residues 1606–1626 (YVALGVTLAALMITFLFLTLL). Residues 1627–1641 (RALRSNQHGIRRNLT) are Cytoplasmic-facing. The chain crosses the membrane as a helical span at residues 1642–1662 (AALGLAQLVFLLGINQADLPF). Residue Ala1663 is a topological domain, extracellular. The helical transmembrane segment at 1664-1684 (CTVIAILLHFLYLCTFSWALL) threads the bilayer. Over 1685 to 1705 (EALHLYRALTEVRDVNASPMR) the chain is Cytoplasmic. Residues 1706–1726 (FYYMLGWGVPAFITGLAVGLD) traverse the membrane as a helical segment. Topologically, residues 1727–1744 (PEGYGNPDFCWLSIYDTL) are extracellular. Residues 1745-1765 (IWSFAGPVAFAVSMSVFLYIL) form a helical membrane-spanning segment. Topologically, residues 1766-1789 (SARASCAAQRQGFEKKGPVSGLRS) are cytoplasmic. The helical transmembrane segment at 1790–1810 (SFTVLLLLSATWLLALLSVNS) threads the bilayer. At 1811–1816 (DTLLFH) the chain is on the extracellular side. Residues 1817 to 1837 (YLFAACNCVQGPFIFLSYVVL) form a helical membrane-spanning segment. Topologically, residues 1838–2144 (SKEVRKALKF…SEFLFFNFLH (307 aa)) are cytoplasmic. Residues 1914 to 2109 (TLNPGQVPPG…PPRPPPRQSL (196 aa)) form a disordered region. Residues 1943 to 1955 (TDSDSDLSLEDDQ) are compositionally biased toward acidic residues. Positions 2016 to 2025 (GTTTKENSGS) are enriched in polar residues. A compositionally biased stretch (basic and acidic residues) spans 2028–2040 (LEERPRENGDALT). Over residues 2082–2095 (GTGSSRGSTASEGS) the composition is skewed to polar residues.

This sequence belongs to the G-protein coupled receptor 2 family. LN-TM7 subfamily. In terms of assembly, heterodimer of 2 chains generated by proteolytic processing; the large extracellular N-terminal fragment and the membrane-bound C-terminal fragment predominantly remain associated and non-covalently linked. The iron and 2-oxoglutarate dependent 3-hydroxylation of aspartate and asparagine is (R) stereospecific within EGF domains. Post-translationally, autoproteolytically processed at the GPS region of the GAIN-B domain; this cleavage modulates receptor activity. In terms of tissue distribution, expressed in the brain. High expression in cerebellum and olfactory bulb. Weaker expression in cerebral cortex, hippocampus and brain stem.

Its subcellular location is the cell membrane. Receptor that may have an important role in cell/cell signaling during nervous system formation. This chain is Cadherin EGF LAG seven-pass G-type receptor 2, found in Rattus norvegicus (Rat).